We begin with the raw amino-acid sequence, 138 residues long: MATVEVEQVTPVAVENVEVPTKTVEETVVETEVTQQPEESVPAVTEQKSEAPIVETNEEVVVEEAEKKDEETEKKTEEKDEKTEVITETPVVEEEEKKAEEVTETPAVVEEEKKTEVVEEKQTEVAAAEEVAVEKAEE.

The segment covering 31 to 41 has biased composition (low complexity); it reads TEVTQQPEESV. Residues 31 to 122 are disordered; the sequence is TEVTQQPEES…KKTEVVEEKQ (92 aa). A run of 6 repeats spans residues 62–68, 71–75, 92–98, 109–114, 118–122, and 131–135. The tract at residues 62-135 is 6 X 5 AA approximate repeats of V-E-E-K-K; sequence VEEAEKKDEE…AAAEEVAVEK (74 aa). Positions 64–85 are enriched in basic and acidic residues; the sequence is EAEKKDEETEKKTEEKDEKTEV. The segment covering 110–122 has biased composition (basic and acidic residues); it reads EEEKKTEVVEEKQ.

In terms of tissue distribution, predominantly expressed in roots (e.g. in endodermis in the stele) and stems, to a lower extent in shoots, flowers and siliques, and, at low levels, in leaves.

It is found in the cytoplasm. It localises to the cytosol. Its function is as follows. Binds calcium Ca(2+) and may act as a signal mediator to buffer Ca(2+). This chain is Cytosolic calcium-binding protein 2, found in Arabidopsis thaliana (Mouse-ear cress).